The primary structure comprises 266 residues: Amylovoran biosynthesis glycosyltransferase AmsE (266 aa).

It belongs to the glycosyltransferase 2 family.

Its pathway is glycan metabolism; exopolysaccharide biosynthesis. In terms of biological role, involved in the biosynthesis of amylovoran which functions as a virulence factor. This Erwinia amylovora (Fire blight bacteria) protein is Amylovoran biosynthesis glycosyltransferase AmsE (amsE).